The primary structure comprises 70 residues: Conotoxin AbVIC (70 aa).

The N-terminal stretch at 1-17 is a signal peptide; the sequence is VLIIAVLFLTACQLTTA. Positions 18-41 are excised as a propeptide; the sequence is ETSSRGKQKHRALRSTDKNSKLTR. Residues 19–41 are disordered; that stretch reads TSSRGKQKHRALRSTDKNSKLTR. 3 disulfides stabilise this stretch: C43-C57, C50-C61, and C56-C68.

It belongs to the conotoxin O1 superfamily. Expressed by the venom duct.

It localises to the secreted. The polypeptide is Conotoxin AbVIC (Conus abbreviatus (Abbreviated cone)).